The following is a 304-amino-acid chain: dTDP-4-dehydrorhamnose reductase (304 aa).

NADH-binding positions include 16–18, 42–43, and 66–68; these read GML, DI, and AWT. Residues 17-18, 42-43, and 66-68 contribute to the NADPH site; these read ML, DI, and AWT. 107 to 108 is a dTDP-beta-L-rhamnose binding site; the sequence is TD. The NADH site is built by tyrosine 131 and lysine 135. Residues tyrosine 131 and lysine 135 each contribute to the NADPH site. Tyrosine 131 serves as the catalytic Proton donor/acceptor. Tryptophan 157 is a binding site for dTDP-beta-L-rhamnose.

Belongs to the dTDP-4-dehydrorhamnose reductase family. Homodimer. Mg(2+) is required as a cofactor.

It catalyses the reaction dTDP-beta-L-rhamnose + NADP(+) = dTDP-4-dehydro-beta-L-rhamnose + NADPH + H(+). Its pathway is carbohydrate biosynthesis; dTDP-L-rhamnose biosynthesis. It functions in the pathway antibiotic biosynthesis; streptomycin biosynthesis. In terms of biological role, involved in the biosynthesis of the streptose moiety of streptomycin. Catalyzes the reduction of dTDP-6-deoxy-L-lyxo-4-hexulose to yield dTDP-L-rhamnose. RmlD uses NADH and NADPH nearly equally well. This Streptomyces griseus protein is dTDP-4-dehydrorhamnose reductase.